The primary structure comprises 128 residues: Large ribosomal subunit protein uL24 (128 aa).

Residues 105-128 are disordered; sequence KAKSRQVGKEKGKYKEETIEKMQE.

This sequence belongs to the universal ribosomal protein uL24 family. As to quaternary structure, component of the large ribosomal subunit.

The protein localises to the cytoplasm. Component of the large ribosomal subunit. The ribosome is a large ribonucleoprotein complex responsible for the synthesis of proteins in the cell. The polypeptide is Large ribosomal subunit protein uL24 (RPL26) (Gallus gallus (Chicken)).